Here is a 183-residue protein sequence, read N- to C-terminus: uncharacterized protein (183 aa).

4 helical membrane passes run 37–59 (LFGY…PRQF), 79–98 (AILL…VTSV), 110–132 (WRTF…VLVL), and 142–161 (AFYA…TYVF).

The protein resides in the cell membrane. This is an uncharacterized protein from Archaeoglobus fulgidus (strain ATCC 49558 / DSM 4304 / JCM 9628 / NBRC 100126 / VC-16).